We begin with the raw amino-acid sequence, 100 residues long: NADH-quinone oxidoreductase subunit K (100 aa).

Helical transmembrane passes span 4–24, 28–48, and 60–80; these read LQHGLILAAILFALGLTGLLI, LLFMLISLEIMINAAALAFVV, and VMYILAISLAAAEASIGLALL.

It belongs to the complex I subunit 4L family. As to quaternary structure, NDH-1 is composed of 13 different subunits. Subunits NuoA, H, J, K, L, M, N constitute the membrane sector of the complex.

It localises to the cell inner membrane. It catalyses the reaction a quinone + NADH + 5 H(+)(in) = a quinol + NAD(+) + 4 H(+)(out). NDH-1 shuttles electrons from NADH, via FMN and iron-sulfur (Fe-S) centers, to quinones in the respiratory chain. The immediate electron acceptor for the enzyme in this species is believed to be ubiquinone. Couples the redox reaction to proton translocation (for every two electrons transferred, four hydrogen ions are translocated across the cytoplasmic membrane), and thus conserves the redox energy in a proton gradient. The protein is NADH-quinone oxidoreductase subunit K of Edwardsiella ictaluri (strain 93-146).